The following is a 47-amino-acid chain: Bifunctional chitinase/lysozyme (47 aa).

The 47-residue stretch at 1-47 (GGIAIYWGQNGNEGTLTQTCNTGKYSYVNIAFLNKFGNGQTPEINLA) folds into the GH18 domain.

Belongs to the glycosyl hydrolase 18 family. Chitinase class II subfamily.

It localises to the secreted. It is found in the extracellular space. The catalysed reaction is Random endo-hydrolysis of N-acetyl-beta-D-glucosaminide (1-&gt;4)-beta-linkages in chitin and chitodextrins.. The enzyme catalyses Hydrolysis of (1-&gt;4)-beta-linkages between N-acetylmuramic acid and N-acetyl-D-glucosamine residues in a peptidoglycan and between N-acetyl-D-glucosamine residues in chitodextrins.. In terms of biological role, bifunctional enzyme with lysozyme/chitinase activity. The protein is Bifunctional chitinase/lysozyme of Parthenocissus quinquefolia (Virginia creeper).